We begin with the raw amino-acid sequence, 178 residues long: Mediator of RNA polymerase II transcription subunit 21 (178 aa).

Residues 36-91 (DDDDVNSYSNMAANAPLPQSQQQRQQQKKQQEPQQEIEQPQQQSNPESKSISPPKE) are disordered. The segment covering 67 to 85 (EPQQEIEQPQQQSNPESKS) has biased composition (low complexity). The stretch at 128-169 (NEQMNLINELSDKLQAIEEERIQKIKEKDNLLNLLESMIKEV) forms a coiled coil.

This sequence belongs to the Mediator complex subunit 21 family. Component of the Mediator complex.

The protein localises to the nucleus. Its function is as follows. Component of the Mediator complex, a coactivator involved in the regulated transcription of nearly all RNA polymerase II-dependent genes. Mediator functions as a bridge to convey information from gene-specific regulatory proteins to the basal RNA polymerase II transcription machinery. Mediator is recruited to promoters by direct interactions with regulatory proteins and serves as a scaffold for the assembly of a functional preinitiation complex with RNA polymerase II and the general transcription factors. This chain is Mediator of RNA polymerase II transcription subunit 21 (SRB7), found in Candida albicans (strain SC5314 / ATCC MYA-2876) (Yeast).